Here is a 235-residue protein sequence, read N- to C-terminus: Biosynthetic peptidoglycan transglycosylase (235 aa).

The chain crosses the membrane as a helical span at residues 12–34; it reads GLGKLLLAALLSTIVSVALLRFI.

This sequence belongs to the glycosyltransferase 51 family.

The protein resides in the cell inner membrane. It carries out the reaction [GlcNAc-(1-&gt;4)-Mur2Ac(oyl-L-Ala-gamma-D-Glu-L-Lys-D-Ala-D-Ala)](n)-di-trans,octa-cis-undecaprenyl diphosphate + beta-D-GlcNAc-(1-&gt;4)-Mur2Ac(oyl-L-Ala-gamma-D-Glu-L-Lys-D-Ala-D-Ala)-di-trans,octa-cis-undecaprenyl diphosphate = [GlcNAc-(1-&gt;4)-Mur2Ac(oyl-L-Ala-gamma-D-Glu-L-Lys-D-Ala-D-Ala)](n+1)-di-trans,octa-cis-undecaprenyl diphosphate + di-trans,octa-cis-undecaprenyl diphosphate + H(+). It functions in the pathway cell wall biogenesis; peptidoglycan biosynthesis. Its function is as follows. Peptidoglycan polymerase that catalyzes glycan chain elongation from lipid-linked precursors. The protein is Biosynthetic peptidoglycan transglycosylase of Aeromonas hydrophila subsp. hydrophila (strain ATCC 7966 / DSM 30187 / BCRC 13018 / CCUG 14551 / JCM 1027 / KCTC 2358 / NCIMB 9240 / NCTC 8049).